A 228-amino-acid polypeptide reads, in one-letter code: Glutamate transport system permease protein GluC (228 aa).

The next 5 helical transmembrane spans lie at 16-36 (FWVT…FGTI), 64-84 (LTLV…LTLA), 100-120 (AVLG…RSGI), 145-165 (IIFP…LIAL), and 195-215 (LFVV…PMGL). The region spanning 16–217 (FWVTIKLTIY…ILTLPMGLGL (202 aa)) is the ABC transmembrane type-1 domain.

This sequence belongs to the binding-protein-dependent transport system permease family. HisMQ subfamily. In terms of assembly, the complex is composed of two ATP-binding proteins (GluA), two transmembrane proteins (GluC and GluD) and a solute-binding protein (GluB).

The protein localises to the cell membrane. Part of the ABC transporter complex GluABCD involved in glutamate uptake. Probably responsible for the translocation of the substrate across the membrane. This chain is Glutamate transport system permease protein GluC, found in Corynebacterium glutamicum (strain ATCC 13032 / DSM 20300 / JCM 1318 / BCRC 11384 / CCUG 27702 / LMG 3730 / NBRC 12168 / NCIMB 10025 / NRRL B-2784 / 534).